A 460-amino-acid chain; its full sequence is 25S rRNA (cytosine-C(5))-methyltransferase rcm1 (460 aa).

S-adenosyl-L-methionine-binding positions include 223–229 (CAAPGNK), E246, D273, and D293. The Nucleophile role is filled by C350. The segment covering 430–439 (KMYKNDDDTK) has biased composition (basic and acidic residues). The disordered stretch occupies residues 430–460 (KMYKNDDDTKKRKRKKKKKEVKKKARIQGEE). The span at 440-460 (KRKRKKKKKEVKKKARIQGEE) shows a compositional bias: basic residues.

This sequence belongs to the class I-like SAM-binding methyltransferase superfamily. RsmB/NOP family. As to quaternary structure, interacts with trm112.

It localises to the nucleus. The protein localises to the nucleolus. The catalysed reaction is a cytidine in 25S rRNA + S-adenosyl-L-methionine = a 5-methylcytidine in 25S rRNA + S-adenosyl-L-homocysteine + H(+). In terms of biological role, S-adenosyl-L-methionine-dependent methyltransferase that specifically methylates the C(5) position of a cytosine in 25S rRNA. The sequence is that of 25S rRNA (cytosine-C(5))-methyltransferase rcm1 (rcm1) from Schizosaccharomyces pombe (strain 972 / ATCC 24843) (Fission yeast).